A 267-amino-acid chain; its full sequence is Probable aquaporin TIP3-2 (267 aa).

Methionine 1 bears the N-acetylmethionine mark. Alanine 2 carries the post-translational modification N-acetylalanine; in Probable aquaporin TIP3-2, N-terminally processed. The Cytoplasmic segment spans residues 2 to 26 (ATSARRAYGFGRADEATHPDSIRAT). The helical transmembrane segment at 27-47 (LAEFLSTFVFVFAGEGSILAL) threads the bilayer. At 48–66 (DKLYWDTAAHTGTNTPGGL) the chain is on the vacuolar side. A helical transmembrane segment spans residues 67 to 87 (VLVALAHALALFAAVSAAINV). The Cytoplasmic portion of the chain corresponds to 88–110 (SGGHVNPAVTFAALIGGRISVIR). An NPA 1 motif is present at residues 93–95 (NPA). The chain crosses the membrane as a helical span at residues 111-131 (AIYYWVAQLIGAILACLLLRL). Residues 132–151 (ATNGLRPVGFHVASGVSELH) lie on the Vacuolar side of the membrane. A helical transmembrane segment spans residues 152-172 (GLLMEIILTFALVYVVYSTAI). Topologically, residues 173–178 (DPKRGS) are cytoplasmic. Residues 179–199 (IGIIAPLAIGLIVGANILVGG) traverse the membrane as a helical segment. Topologically, residues 200-226 (PFDGASMNPARAFGPALVGWRWSNHWI) are vacuolar. Residues 207–209 (NPA) carry the NPA 2 motif. A helical membrane pass occupies residues 227–247 (YWVGPFIGGALAALIYEYMII). Residues 248–267 (PSVNEPPHHSTHQPLAPEDY) are Cytoplasmic-facing.

It belongs to the MIP/aquaporin (TC 1.A.8) family. TIP (TC 1.A.8.10) subfamily. Predominantly expressed in developing seeds. Also expressed in rosette leaves.

The protein localises to the vacuole membrane. In terms of biological role, aquaporins facilitate the transport of water and small neutral solutes across cell membranes. This is Probable aquaporin TIP3-2 (TIP3-2) from Arabidopsis thaliana (Mouse-ear cress).